The following is a 55-amino-acid chain: Large ribosomal subunit protein bL33 (55 aa).

It belongs to the bacterial ribosomal protein bL33 family.

This is Large ribosomal subunit protein bL33 from Aliivibrio salmonicida (strain LFI1238) (Vibrio salmonicida (strain LFI1238)).